Reading from the N-terminus, the 118-residue chain is Large ribosomal subunit protein uL18 (118 aa).

The protein belongs to the universal ribosomal protein uL18 family. In terms of assembly, part of the 50S ribosomal subunit; part of the 5S rRNA/L5/L18/L25 subcomplex. Contacts the 5S and 23S rRNAs.

This is one of the proteins that bind and probably mediate the attachment of the 5S RNA into the large ribosomal subunit, where it forms part of the central protuberance. The protein is Large ribosomal subunit protein uL18 of Campylobacter hominis (strain ATCC BAA-381 / DSM 21671 / CCUG 45161 / LMG 19568 / NCTC 13146 / CH001A).